The primary structure comprises 26 residues: uncharacterized protein (26 aa).

A compositionally biased stretch (polar residues) spans 1–16 (MPEQKANCSPNGNITV). Residues 1–26 (MPEQKANCSPNGNITVDSMIMSLGSS) form a disordered region.

This is an uncharacterized protein from Saccharomyces cerevisiae (strain ATCC 204508 / S288c) (Baker's yeast).